Consider the following 124-residue polypeptide: Large-conductance mechanosensitive channel (124 aa).

3 consecutive transmembrane segments (helical) span residues 14–34 (VIDLAVGVIIGAAFTAIVQSL), 37–57 (NLINPLIGIFVGKIDLSNLVF), and 67–87 (GSFINSVINFLIISFVVFLIV).

The protein belongs to the MscL family. In terms of assembly, homopentamer.

It localises to the cell membrane. Its function is as follows. Channel that opens in response to stretch forces in the membrane lipid bilayer. May participate in the regulation of osmotic pressure changes within the cell. In Lactobacillus acidophilus (strain ATCC 700396 / NCK56 / N2 / NCFM), this protein is Large-conductance mechanosensitive channel.